We begin with the raw amino-acid sequence, 760 residues long: 5-methyltetrahydropteroyltriglutamate--homocysteine methyltransferase (760 aa).

Residues 24–27 (RELK) and K118 each bind 5-methyltetrahydropteroyltri-L-glutamate. L-homocysteine is bound by residues 437–439 (IGS) and E490. L-methionine is bound by residues 437–439 (IGS) and E490. Residues 521 to 522 (RC) and W567 each bind 5-methyltetrahydropteroyltri-L-glutamate. D605 is a binding site for L-homocysteine. D605 contacts L-methionine. A 5-methyltetrahydropteroyltri-L-glutamate-binding site is contributed by E611. Positions 647, 649, and 671 each coordinate Zn(2+). The active-site Proton donor is H700. A Zn(2+)-binding site is contributed by C732.

This sequence belongs to the vitamin-B12 independent methionine synthase family. The cofactor is Zn(2+).

The enzyme catalyses 5-methyltetrahydropteroyltri-L-glutamate + L-homocysteine = tetrahydropteroyltri-L-glutamate + L-methionine. It functions in the pathway amino-acid biosynthesis; L-methionine biosynthesis via de novo pathway; L-methionine from L-homocysteine (MetE route): step 1/1. Functionally, catalyzes the transfer of a methyl group from 5-methyltetrahydrofolate to homocysteine resulting in methionine formation. The sequence is that of 5-methyltetrahydropteroyltriglutamate--homocysteine methyltransferase from Mycobacterium leprae (strain TN).